A 971-amino-acid polypeptide reads, in one-letter code: Translation initiation factor IF-2 (971 aa).

Residues Asp-48 to Lys-63 are compositionally biased toward basic and acidic residues. Disordered regions lie at residues Asp-48 to Ile-86 and Asp-101 to Gln-381. A compositionally biased stretch (low complexity) spans Gly-105–Ala-114. Residues Glu-121–Ala-181 are compositionally biased toward basic and acidic residues. A compositionally biased stretch (low complexity) spans Ala-182–Thr-203. A compositionally biased stretch (basic and acidic residues) spans Asp-210 to Arg-261. Residues Pro-277 to Pro-286 show a composition bias toward pro residues. Residues Ala-304–Ala-326 show a composition bias toward low complexity. Residues Ser-356–Lys-369 show a composition bias toward gly residues. The tr-type G domain occupies Pro-471–Lys-640. A G1 region spans residues Gly-480–Thr-487. A GTP-binding site is contributed by Gly-480–Thr-487. The G2 stretch occupies residues Gly-505 to His-509. A G3 region spans residues Asp-526 to Gly-529. GTP is bound by residues Asp-526–His-530 and Asn-580–Asp-583. The tract at residues Asn-580 to Asp-583 is G4. A G5 region spans residues Ser-616–Lys-618.

This sequence belongs to the TRAFAC class translation factor GTPase superfamily. Classic translation factor GTPase family. IF-2 subfamily.

The protein resides in the cytoplasm. In terms of biological role, one of the essential components for the initiation of protein synthesis. Protects formylmethionyl-tRNA from spontaneous hydrolysis and promotes its binding to the 30S ribosomal subunits. Also involved in the hydrolysis of GTP during the formation of the 70S ribosomal complex. The polypeptide is Translation initiation factor IF-2 (Burkholderia orbicola (strain MC0-3)).